Here is a 165-residue protein sequence, read N- to C-terminus: SPbeta prophage-derived uncharacterized protein YorR (165 aa).

In Bacillus subtilis (strain 168), this protein is SPbeta prophage-derived uncharacterized protein YorR (yorR).